Here is a 388-residue protein sequence, read N- to C-terminus: Acetate kinase (388 aa).

N14 lines the Mg(2+) pocket. K21 is an ATP binding site. R80 is a binding site for substrate. D137 serves as the catalytic Proton donor/acceptor. ATP-binding positions include 197 to 201 (HLGNG), 271 to 273 (DFR), and 319 to 323 (GIGEH). Position 373 (E373) interacts with Mg(2+).

Belongs to the acetokinase family. As to quaternary structure, homodimer. Mg(2+) serves as cofactor. Requires Mn(2+) as cofactor.

It is found in the cytoplasm. It carries out the reaction acetate + ATP = acetyl phosphate + ADP. It participates in metabolic intermediate biosynthesis; acetyl-CoA biosynthesis; acetyl-CoA from acetate: step 1/2. In terms of biological role, catalyzes the formation of acetyl phosphate from acetate and ATP. Can also catalyze the reverse reaction. The chain is Acetate kinase from Mycobacterium marinum (strain ATCC BAA-535 / M).